The following is a 226-amino-acid chain: MSLSAFYVTGTDTGIGKTFVSCILLHMLRGRGQRAVGMKPVASGCTYSDTGWRNEDALALQAASDPTPAYDLINPYALPAAVAPEIAAIEAGVTVALEPLSAAFTQLRAQADVVVVEGVGGWATPLNATIDQATLVRALEIPVVLVVGLRLGCLNHARLSTTAIMADGLRCIGWIANTIDPHMARIEENLALLRQRLPIPYWGHLPHIPPGINPATLAARLHPQGD.

14–19 (GIGKTF) lines the ATP pocket. Position 18 (Thr18) interacts with Mg(2+). Lys39 is an active-site residue. Ser43 is a substrate binding site. ATP is bound by residues Asp56, 117–120 (EGVG), 177–178 (NT), 206–208 (PHI), and Asn213. Mg(2+) is bound by residues Asp56 and Glu117.

Belongs to the dethiobiotin synthetase family. Homodimer. It depends on Mg(2+) as a cofactor.

The protein resides in the cytoplasm. It carries out the reaction (7R,8S)-7,8-diammoniononanoate + CO2 + ATP = (4R,5S)-dethiobiotin + ADP + phosphate + 3 H(+). Its pathway is cofactor biosynthesis; biotin biosynthesis; biotin from 7,8-diaminononanoate: step 1/2. Its function is as follows. Catalyzes a mechanistically unusual reaction, the ATP-dependent insertion of CO2 between the N7 and N8 nitrogen atoms of 7,8-diaminopelargonic acid (DAPA, also called 7,8-diammoniononanoate) to form a ureido ring. This is ATP-dependent dethiobiotin synthetase BioD from Xylella fastidiosa (strain 9a5c).